The primary structure comprises 219 residues: Clathrin light chain (219 aa).

Residues 32–136 (AEITGGSASA…KKEELRQQSK (105 aa)) are disordered. An involved in binding clathrin heavy chain region spans residues 96–158 (PPPSREEPEK…SISKTKLASR (63 aa)). Over residues 99-136 (SREEPEKIRKWREEQKQRLEEKDIEEERKKEELRQQSK) the composition is skewed to basic and acidic residues.

This sequence belongs to the clathrin light chain family. As to quaternary structure, clathrin coats are formed from molecules containing 3 heavy chains and 3 light chains.

The protein localises to the cytoplasmic vesicle membrane. It is found in the membrane. It localises to the coated pit. Clathrin is the major protein of the polyhedral coat of coated pits and vesicles. The sequence is that of Clathrin light chain (Clc) from Drosophila melanogaster (Fruit fly).